A 426-amino-acid polypeptide reads, in one-letter code: MKLQKPKGTQDILPGDAAKWQYVESVARDTFSQYNYGEIRTPMFEHYEVISRSVGDTTDIVTKEMYDFYDKGDRHITLRPEGTAPVVRSYVENKLFAPEVQKPVKLYYIGSMFRYERPQAGRLREFHQIGVECFGAANPATDVETIAMAYHLFEKLGIKDVTLHLNSLGSPESRSAYRQALIDYLTPMRDQLSKDSQRRLDENPLRVLDSKEKEDKLAVEKAPSILDYLDEESQAHFEAVKAMLEALDIPYVIDTNMVRGLDYYNHTIFEFITSVEGSDLTICAGGRYDSLVGYFGGPETPGFGFGLGLERLLMVIEKQGITLPIETEMDVYLAVLGDGANSKALELVQAIRRQGFTAERDYLGRKIKAQFKSADTFKAKLVMTLGESEVEAGKAVIKNNRSRQEVEVSFEDMMTNFANISEQLLS.

The protein belongs to the class-II aminoacyl-tRNA synthetase family. As to quaternary structure, homodimer.

Its subcellular location is the cytoplasm. It catalyses the reaction tRNA(His) + L-histidine + ATP = L-histidyl-tRNA(His) + AMP + diphosphate + H(+). In Streptococcus pyogenes serotype M3 (strain ATCC BAA-595 / MGAS315), this protein is Histidine--tRNA ligase.